We begin with the raw amino-acid sequence, 349 residues long: D-alanine--D-alanine ligase (349 aa).

One can recognise an ATP-grasp domain in the interval 132-335 (KHVFEAVGVP…YSDLIEKLVD (204 aa)). 162 to 217 (VEKLEFPVFVKPANMGSSVGISKVDDLADLQPALSEAYKYDNRVVIEQGVDAREIE) lines the ATP pocket. Mg(2+)-binding residues include aspartate 289, glutamate 302, and asparagine 304.

It belongs to the D-alanine--D-alanine ligase family. The cofactor is Mg(2+). Mn(2+) serves as cofactor.

Its subcellular location is the cytoplasm. It carries out the reaction 2 D-alanine + ATP = D-alanyl-D-alanine + ADP + phosphate + H(+). It functions in the pathway cell wall biogenesis; peptidoglycan biosynthesis. Its function is as follows. Cell wall formation. The chain is D-alanine--D-alanine ligase from Lactococcus lactis subsp. cremoris (strain SK11).